The chain runs to 122 residues: Selenoprotein H (122 aa).

Position 20 is an N6-acetyllysine (lysine 20). The segment at residues 41–44 (CTSU) is a cross-link (cysteinyl-selenocysteine (Cys-Sec); redox-active). Selenocysteine 44 is a non-standard amino acid (selenocysteine).

The protein belongs to the SelWTH family.

Functionally, may be involved in a redox-related process. The chain is Selenoprotein H from Macaca fascicularis (Crab-eating macaque).